The following is a 229-amino-acid chain: Prolactin (229 aa).

The signal sequence occupies residues 1 to 30 (MDSKGSAQKGSRLLLLLVVSNLLLCQGVVS). Cysteines 34 and 41 form a disulfide. Serine 56 carries the phosphoserine modification. N-linked (GlcNAc...) asparagine; partial glycosylation is present at asparagine 61. A phosphoserine mark is found at serine 64 and serine 120. 2 disulfide bridges follow: cysteine 88/cysteine 204 and cysteine 221/cysteine 229.

This sequence belongs to the somatotropin/prolactin family. Interacts with PRLR.

Its subcellular location is the secreted. Functionally, prolactin acts primarily on the mammary gland by promoting lactation, mammogenesis, mitogenesis and osmoregulation. The sequence is that of Prolactin (PRL) from Ovis aries (Sheep).